Here is a 168-residue protein sequence, read N- to C-terminus: Large ribosomal subunit protein uL10 (168 aa).

This sequence belongs to the universal ribosomal protein uL10 family. As to quaternary structure, part of the ribosomal stalk of the 50S ribosomal subunit. The N-terminus interacts with L11 and the large rRNA to form the base of the stalk. The C-terminus forms an elongated spine to which L12 dimers bind in a sequential fashion forming a multimeric L10(L12)X complex.

Forms part of the ribosomal stalk, playing a central role in the interaction of the ribosome with GTP-bound translation factors. The protein is Large ribosomal subunit protein uL10 of Clostridioides difficile (strain 630) (Peptoclostridium difficile).